The chain runs to 921 residues: Alanine--tRNA ligase (921 aa).

Positions 602, 606, 706, and 710 each coordinate Zn(2+).

The protein belongs to the class-II aminoacyl-tRNA synthetase family. Requires Zn(2+) as cofactor.

Its subcellular location is the cytoplasm. The catalysed reaction is tRNA(Ala) + L-alanine + ATP = L-alanyl-tRNA(Ala) + AMP + diphosphate. Functionally, catalyzes the attachment of alanine to tRNA(Ala) in a two-step reaction: alanine is first activated by ATP to form Ala-AMP and then transferred to the acceptor end of tRNA(Ala). Also edits incorrectly charged Ser-tRNA(Ala) and Gly-tRNA(Ala) via its editing domain. The chain is Alanine--tRNA ligase from Hyperthermus butylicus (strain DSM 5456 / JCM 9403 / PLM1-5).